The sequence spans 389 residues: Cytochrome f (389 aa).

Residues 1–42 (MTTFFISKVNGPVNKSLIWLKIHIYEFFLLKFMLLFPPTVCS) form the signal peptide. Residues tyrosine 105, cysteine 125, cysteine 128, and histidine 129 each coordinate heme. The helical transmembrane segment at 355–375 (LQALIVFFIFVILTQLFLVLK) threads the bilayer.

It belongs to the cytochrome f family. In terms of assembly, the 4 large subunits of the cytochrome b6-f complex are cytochrome b6, subunit IV (17 kDa polypeptide, petD), cytochrome f and the Rieske protein, while the 4 small subunits are PetG, PetL, PetM and PetN. The complex functions as a dimer. Requires heme as cofactor.

Its subcellular location is the plastid. The protein resides in the chloroplast thylakoid membrane. Component of the cytochrome b6-f complex, which mediates electron transfer between photosystem II (PSII) and photosystem I (PSI), cyclic electron flow around PSI, and state transitions. The polypeptide is Cytochrome f (Pleurastrum terricola (Filamentous green alga)).